Here is a 717-residue protein sequence, read N- to C-terminus: Protein Teyrha-meyrha (717 aa).

A compositionally biased stretch (polar residues) spans 140 to 152; it reads FRTDSASPTCTSH. Disordered stretches follow at residues 140-214, 229-270, 440-498, 511-539, 563-594, and 624-717; these read FRTD…SNPA, HLAA…APPV, KIPP…QPGK, SQKDPHPDEHDVSTNVTTASSSSWPGEAP, DSCGVGVNDTNSSSSTHNNGGGSNKDLMMDTA, and QRRQ…DTKA. Residues 195-214 are compositionally biased toward low complexity; that stretch reads ATSSSASSSSSSSCSTSNPA. A compositionally biased stretch (basic residues) spans 235–263; that stretch reads PHHHPHTHAHSHPHPLAHPHAHSHHHVGH. Basic and acidic residues predominate over residues 442-451; that stretch reads PPEDDAKSQE. Positions 452 to 466 are enriched in acidic residues; the sequence is EIETVDVESCNDEVP. Polar residues predominate over residues 471-482; that stretch reads ELATPSSGSSGT. A compositionally biased stretch (basic and acidic residues) spans 513–522; that stretch reads KDPHPDEHDV. 2 stretches are compositionally biased toward low complexity: residues 523 to 533 and 570 to 580; these read STNVTTASSSS and NDTNSSSSTHN. Residues 630–640 are compositionally biased toward polar residues; sequence QNVGSSRSLEN. Positions 667-686 are enriched in low complexity; the sequence is NNNNNNNNNNNNSNSNNNNN. Positions 687-704 are enriched in polar residues; it reads PSTKYAESMENSLSQLSS.

As to expression, in embryos, expressed specifically in M12 (at protein level).

Its subcellular location is the nucleus. In terms of biological role, required for the correct synaptic targeting of motoneurons RP5 and V to muscle 12 (M12). May be involved in the negative regulation of Tl in M12. Involved in the correct patterning of veins in the proximal (costal) region of the wing blade. This chain is Protein Teyrha-meyrha, found in Drosophila melanogaster (Fruit fly).